The primary structure comprises 102 residues: Omega-hexatoxin-Hi2a (102 aa).

The signal sequence occupies residues 1-23; it reads MKFSKLSLTLALILTQALLVVCG. Positions 24–56 are excised as a propeptide; sequence KINEDFMENGLESHALHDEIRKPIDTEKADAER. 3 cysteine pairs are disulfide-bonded: Cys61-Cys75, Cys68-Cys81, and Cys74-Cys86. Leu98 is subject to Leucine amide. A propeptide spanning residues 100–102 is cleaved from the precursor; the sequence is RAL.

Belongs to the neurotoxin 15 family. 02 (omega-actx) subfamily. In terms of tissue distribution, expressed by the venom gland.

The protein resides in the secreted. Functionally, potent inhibitor of insect, but not mammalian, voltage-gated calcium channels (Cav). The chain is Omega-hexatoxin-Hi2a from Hadronyche infensa (Fraser island funnel-web spider).